Consider the following 54-residue polypeptide: Large ribosomal subunit protein bL33C (54 aa).

Belongs to the bacterial ribosomal protein bL33 family.

This Streptomyces coelicolor (strain ATCC BAA-471 / A3(2) / M145) protein is Large ribosomal subunit protein bL33C (rpmG3).